Consider the following 679-residue polypeptide: Recombination repair protein 1 (679 aa).

The disordered stretch occupies residues 1 to 407 (MPRVKAVKKQ…TKKAKKAETK (407 aa)). Residues 45-55 (AKGKPRARKAT) show a composition bias toward basic residues. Residues 106-116 (ATAEAEPEPKV) show a composition bias toward basic and acidic residues. Residues threonine 133 and threonine 140 each carry the phosphothreonine modification. The residue at position 142 (serine 142) is a Phosphoserine. 2 stretches are compositionally biased toward basic and acidic residues: residues 179–189 (EPPKQRARKEA) and 203–214 (SKEKVQKAETAA). Serine 258 carries the post-translational modification Phosphoserine. A compositionally biased stretch (basic and acidic residues) spans 312 to 347 (KKEGKEPAPGKKQKKSADKENGVVEEEAKPSTETKP). The tract at residues 428 to 679 (KICSWNVAGL…HCPITIFFNI (252 aa)) is AP endonuclease. Glutamate 461 contributes to the Mg(2+) binding site. The active site involves tyrosine 533. Mg(2+) is bound by residues aspartate 572, asparagine 574, and aspartate 669. Aspartate 572 functions as the Proton donor/acceptor in the catalytic mechanism.

The protein belongs to the DNA repair enzymes AP/ExoA family. As to quaternary structure, interacts with the zeta DNA polymerase complex; interacts (via the N-terminus) with the accessory subunit PolZ2/Rev7 and also interacts with the catalytic component PolZ1, however the interaction with PolZ1 is likely via PolZ2. Mg(2+) is required as a cofactor. Requires Mn(2+) as cofactor.

It localises to the nucleus. It carries out the reaction Exonucleolytic cleavage in the 3'- to 5'-direction to yield nucleoside 5'-phosphates.. Plays a role in the cellular response to oxidative stress by promoting DNA repair mechanisms such as base excision repair and possibly homologous recombination repair. Functions as an apurinic/apyrimidinic (AP) endodeoxyribonuclease in the DNA base excision repair (BER) pathway of DNA lesions induced by oxidative and alkylating agents. Likely to initiate repair of AP sites in DNA by catalyzing hydrolytic incision of the phosphodiester backbone immediately adjacent to the damage, generating a single-strand break with 5'-deoxyribose phosphate and 3'-hydroxyl ends. Has a 3'-5' exoribonuclease activity on mismatched deoxyribonucleotides at the 3' termini of nicked or gapped DNA molecules during short-patch BER. Has apurinic endonuclease and double-stranded DNA 3'-exonuclease activities and carries out single-stranded DNA renaturation in a Mg(2+)-dependent manner. Activity is more efficient in purine-rich regions of dsDNA than in pyrimidine-rich regions. In Drosophila melanogaster (Fruit fly), this protein is Recombination repair protein 1.